The following is a 414-amino-acid chain: Probable protein phosphatase 2C 80 (414 aa).

One can recognise a PPM-type phosphatase domain in the interval 174 to 411; it reads SCYLPHPEKE…DDITAVVSYV (238 aa). The Mn(2+) site is built by Asp-204, Gly-205, Asp-336, and Asp-402.

This sequence belongs to the PP2C family. Requires Mg(2+) as cofactor. It depends on Mn(2+) as a cofactor.

The enzyme catalyses O-phospho-L-seryl-[protein] + H2O = L-seryl-[protein] + phosphate. It catalyses the reaction O-phospho-L-threonyl-[protein] + H2O = L-threonyl-[protein] + phosphate. The sequence is that of Probable protein phosphatase 2C 80 from Arabidopsis thaliana (Mouse-ear cress).